A 45-amino-acid polypeptide reads, in one-letter code: Defensin Tk-AMP-D4 (45 aa).

4 cysteine pairs are disulfide-bonded: Cys3-Cys45, Cys14-Cys34, Cys20-Cys39, and Cys24-Cys41.

Functionally, plant defense peptide. This chain is Defensin Tk-AMP-D4, found in Triticum kiharae (Wheat).